A 123-amino-acid polypeptide reads, in one-letter code: UPF0426 protein At1g28150, chloroplastic (123 aa).

Residues methionine 1–serine 26 constitute a chloroplast transit peptide. The interval serine 97–glutamate 123 is disordered. A compositionally biased stretch (acidic residues) spans threonine 100–glutamate 123.

Belongs to the UPF0426 family.

It is found in the plastid. It localises to the chloroplast. Its subcellular location is the plastoglobule. The chain is UPF0426 protein At1g28150, chloroplastic from Arabidopsis thaliana (Mouse-ear cress).